A 125-amino-acid chain; its full sequence is Large ribosomal subunit protein eL31 (125 aa).

Methionine 1 is modified (N-acetylmethionine). Serine 15 carries the post-translational modification Phosphoserine. Lysine 55 and lysine 70 each carry N6-succinyllysine. Lysine 75 bears the N6-acetyllysine; alternate mark. Lysine 75 bears the N6-succinyllysine; alternate mark. At serine 98 the chain carries Phosphoserine.

It belongs to the eukaryotic ribosomal protein eL31 family. Component of the large ribosomal subunit.

Its subcellular location is the cytoplasm. Functionally, component of the large ribosomal subunit. The ribosome is a large ribonucleoprotein complex responsible for the synthesis of proteins in the cell. The chain is Large ribosomal subunit protein eL31 (RPL31) from Pongo abelii (Sumatran orangutan).